The sequence spans 169 residues: Large ribosomal subunit protein uL15 (169 aa).

Positions 20–56 are disordered; the sequence is GRGIGSGKGKTGGRGVKGQKARSGVSIKGFEGGQMPL. The span at 21–35 shows a compositional bias: gly residues; the sequence is RGIGSGKGKTGGRGV.

This sequence belongs to the universal ribosomal protein uL15 family. In terms of assembly, part of the 50S ribosomal subunit.

In terms of biological role, binds to the 23S rRNA. This Methylorubrum extorquens (strain CM4 / NCIMB 13688) (Methylobacterium extorquens) protein is Large ribosomal subunit protein uL15.